A 270-amino-acid chain; its full sequence is L-fucose dehydrogenase (270 aa).

12 residues coordinate NAD(+): arginine 19, isoleucine 21, aspartate 40, lysine 41, aspartate 62, valine 63, asparagine 89, tyrosine 154, lysine 158, isoleucine 187, threonine 189, and leucine 191.

The protein belongs to the short-chain dehydrogenases/reductases (SDR) family.

The catalysed reaction is L-fucose + NAD(+) = L-fucono-1,5-lactone + NADH + H(+). It carries out the reaction D-arabinose + NAD(+) = D-arabinono-1,5-lactone + NADH + H(+). It catalyses the reaction L-galactose + NAD(+) = L-galactono-1,5-lactone + NADH + H(+). Catalyzes the NAD(+)-dependent oxidation of L-fucose, yielding L-fucono-1,5-lactone, which rapidly converts spontaneously to L-fucone-1,4-lactone. Does not use NADPH. Displays low activity on L-fucose, D-arabinose and L-galactose compared with rabbit and human. This is consitent with the low L-fucose metabolism observed in this species. The chain is L-fucose dehydrogenase (Hsd17b14) from Rattus norvegicus (Rat).